We begin with the raw amino-acid sequence, 452 residues long: Exodeoxyribonuclease 7 large subunit (452 aa).

This sequence belongs to the XseA family. In terms of assembly, heterooligomer composed of large and small subunits.

Its subcellular location is the cytoplasm. The catalysed reaction is Exonucleolytic cleavage in either 5'- to 3'- or 3'- to 5'-direction to yield nucleoside 5'-phosphates.. In terms of biological role, bidirectionally degrades single-stranded DNA into large acid-insoluble oligonucleotides, which are then degraded further into small acid-soluble oligonucleotides. The sequence is that of Exodeoxyribonuclease 7 large subunit from Bordetella avium (strain 197N).